A 616-amino-acid polypeptide reads, in one-letter code: Elongation factor 4 (616 aa).

The 187-residue stretch at 17–203 folds into the tr-type G domain; sequence ERIRNFCIIA…RVCELVPAPV (187 aa). Residues 29–34 and 150–153 each bind GTP; these read DHGKST and NKID.

The protein belongs to the TRAFAC class translation factor GTPase superfamily. Classic translation factor GTPase family. LepA subfamily.

The protein localises to the cell membrane. It carries out the reaction GTP + H2O = GDP + phosphate + H(+). Functionally, required for accurate and efficient protein synthesis under certain stress conditions. May act as a fidelity factor of the translation reaction, by catalyzing a one-codon backward translocation of tRNAs on improperly translocated ribosomes. Back-translocation proceeds from a post-translocation (POST) complex to a pre-translocation (PRE) complex, thus giving elongation factor G a second chance to translocate the tRNAs correctly. Binds to ribosomes in a GTP-dependent manner. The sequence is that of Elongation factor 4 from Corynebacterium jeikeium (strain K411).